A 339-amino-acid chain; its full sequence is O-methyltransferase 7 (339 aa).

The S-adenosyl-L-methionine site is built by Gly-186, Asp-209, Ser-232, Phe-233, and Lys-246. His-250 serves as the catalytic Proton acceptor.

The protein belongs to the class I-like SAM-binding methyltransferase superfamily. Cation-independent O-methyltransferase family. COMT subfamily.

The catalysed reaction is (3,5-dichloro-2,4,6-trihydroxyphenyl)hexan-1-one + S-adenosyl-L-methionine = 1-(3,5-dichloro-2,6-dihydroxy-4-methoxyphenyl)hexan-1-one + S-adenosyl-L-homocysteine + H(+). This chain is O-methyltransferase 7 (omt7), found in Dictyostelium discoideum (Social amoeba).